Reading from the N-terminus, the 943-residue chain is Glycine dehydrogenase (decarboxylating) (943 aa).

Lysine 695 is subject to N6-(pyridoxal phosphate)lysine.

The protein belongs to the GcvP family. In terms of assembly, the glycine cleavage system is composed of four proteins: P, T, L and H. It depends on pyridoxal 5'-phosphate as a cofactor.

It carries out the reaction N(6)-[(R)-lipoyl]-L-lysyl-[glycine-cleavage complex H protein] + glycine + H(+) = N(6)-[(R)-S(8)-aminomethyldihydrolipoyl]-L-lysyl-[glycine-cleavage complex H protein] + CO2. The glycine cleavage system catalyzes the degradation of glycine. The P protein binds the alpha-amino group of glycine through its pyridoxal phosphate cofactor; CO(2) is released and the remaining methylamine moiety is then transferred to the lipoamide cofactor of the H protein. The sequence is that of Glycine dehydrogenase (decarboxylating) from Jannaschia sp. (strain CCS1).